The following is a 413-amino-acid chain: MSQAQPLLVRMMNTNIVIQILIGIIAGVALATLAPNLAISAGLFGELFVSALKAVAPILVFILVAASIANQKRGQNSNMKPVIVLYLVGTFCASLTAVVMSFLFPTTLTLVIDAATNTAPEGIVEVINTLLFKIIDNPINALMTGNFIGILGWAVALGLGLHSASDATKKIFVDLSNCISAIVTVVIRFAPIGIFGLVSHTFAETGFAVLAGYSHLLAVLLGSMAFIALIVNPLIVYIRTRRNPYPLVFLCLRESGVTAFFTRSSAANIPVNMALCERLNLHKDTYSVSIPLGATINMAGAAITITVLTLAAVNTAGVEVDLATALLLSLVAAVSACGASGVAGGSLLLIPLACSLFGISNDIAMQVVAIGFIIGVVQDSAETALNSSTDVLFTTAACRKADNPYKPLVQPTN.

The next 9 membrane-spanning stretches (helical) occupy residues 15–35 (NIVIQILIGIIAGVALATLAP), 48–68 (FVSALKAVAPILVFILVAASI), 82–102 (VIVLYLVGTFCASLTAVVMSF), 141–161 (ALMTGNFIGILGWAVALGLGL), 178–198 (CISAIVTVVIRFAPIGIFGLV), 216–236 (LLAVLLGSMAFIALIVNPLIV), 290–310 (IPLGATINMAGAAITITVLTL), 330–350 (LVAAVSACGASGVAGGSLLLI), and 357–377 (FGISNDIAMQVVAIGFIIGVV).

It belongs to the dicarboxylate/amino acid:cation symporter (DAACS) (TC 2.A.23) family.

It is found in the cell inner membrane. It carries out the reaction L-serine(in) + Na(+)(in) = L-serine(out) + Na(+)(out). The enzyme catalyses L-threonine(in) + Na(+)(in) = L-threonine(out) + Na(+)(out). Involved in the import of serine and threonine into the cell, with the concomitant import of sodium (symport system). In Aliivibrio fischeri (strain ATCC 700601 / ES114) (Vibrio fischeri), this protein is Serine/threonine transporter SstT.